We begin with the raw amino-acid sequence, 59 residues long: Large ribosomal subunit protein bL32 (59 aa).

The segment covering 1–15 (MAVPKRKTSKSKRDM) has biased composition (basic residues). Positions 1–21 (MAVPKRKTSKSKRDMRRASNS) are disordered.

The protein belongs to the bacterial ribosomal protein bL32 family.

The sequence is that of Large ribosomal subunit protein bL32 from Alkaliphilus metalliredigens (strain QYMF).